A 366-amino-acid polypeptide reads, in one-letter code: Agamous-like MADS-box protein AGL36 (366 aa).

The region spanning Met-1 to Arg-59 is the MADS-box domain. A coiled-coil region spans residues Thr-86–Met-115.

As to quaternary structure, interacts with AGL62.

The protein localises to the nucleus. Functionally, probable transcription factor. The chain is Agamous-like MADS-box protein AGL36 (AGL36) from Arabidopsis thaliana (Mouse-ear cress).